Consider the following 596-residue polypeptide: M-phase inducer phosphatase (596 aa).

A phosphoserine mark is found at Ser99 and Ser178. The segment at 174-221 (LSSSSFDSYLRPNVSRSRSSGNAPPFLRSRSSSSYSINKKKGTSGGQA) is disordered. One can recognise a Rhodanese domain in the interval 429-533 (IFDKCIIIDC…FYENHKNRCD (105 aa)). The Phosphocysteine intermediate role is filled by Cys480.

Belongs to the MPI phosphatase family. Interacts with rad24 during G2 in a srk1-dependent manner; the interaction is increased during osmostress. Phosphorylated by srk1 in the N-terminus; phosphorylation promotes nuclear exclusion.

The protein localises to the cytoplasm. Its subcellular location is the nucleus. The enzyme catalyses O-phospho-L-tyrosyl-[protein] + H2O = L-tyrosyl-[protein] + phosphate. Tyrosine protein phosphatase which functions as a dosage-dependent inducer of mitotic and meiotic progression. Directly dephosphorylates cdc2 and stimulates its kinase activity. Required for the G2/M transition of the cell cycle. Required for induction of meiosis II. The protein is M-phase inducer phosphatase of Schizosaccharomyces pombe (strain 972 / ATCC 24843) (Fission yeast).